Here is a 256-residue protein sequence, read N- to C-terminus: Cysteine-rich repeat secretory protein 29 (256 aa).

The first 26 residues, 1–26 (MSSVFGSVHILAMIAIQLLLIHSVSS), serve as a signal peptide directing secretion. Gnk2-homologous domains follow at residues 33 to 136 (YLHH…SVAS) and 142 to 253 (YEND…LYPF).

Belongs to the cysteine-rich repeat secretory protein family.

It is found in the secreted. The sequence is that of Cysteine-rich repeat secretory protein 29 (CRRSP29) from Arabidopsis thaliana (Mouse-ear cress).